The sequence spans 463 residues: Ribulose bisphosphate carboxylase large chain (463 aa).

Residue Lys5 is modified to N6,N6,N6-trimethyllysine. Substrate is bound by residues Asn114 and Thr164. The active-site Proton acceptor is Lys166. Lys168 is a substrate binding site. Lys192, Asp194, and Glu195 together coordinate Mg(2+). Lys192 is modified (N6-carboxylysine). Catalysis depends on His285, which acts as the Proton acceptor. Substrate is bound by residues Arg286, His318, and Ser370.

Belongs to the RuBisCO large chain family. Type I subfamily. As to quaternary structure, heterohexadecamer of 8 large chains and 8 small chains; disulfide-linked. The disulfide link is formed within the large subunit homodimers. It depends on Mg(2+) as a cofactor. The disulfide bond which can form in the large chain dimeric partners within the hexadecamer appears to be associated with oxidative stress and protein turnover.

Its subcellular location is the plastid. The protein localises to the chloroplast. It catalyses the reaction 2 (2R)-3-phosphoglycerate + 2 H(+) = D-ribulose 1,5-bisphosphate + CO2 + H2O. The catalysed reaction is D-ribulose 1,5-bisphosphate + O2 = 2-phosphoglycolate + (2R)-3-phosphoglycerate + 2 H(+). In terms of biological role, ruBisCO catalyzes two reactions: the carboxylation of D-ribulose 1,5-bisphosphate, the primary event in carbon dioxide fixation, as well as the oxidative fragmentation of the pentose substrate in the photorespiration process. Both reactions occur simultaneously and in competition at the same active site. The sequence is that of Ribulose bisphosphate carboxylase large chain from Pelargonium grandiflorum (Geranium).